The primary structure comprises 295 residues: Small ribosomal subunit protein mS23 (295 aa).

The disordered stretch occupies residues 249-295 (IGSVVEEEKSQSSLFEDLLSNDNLQSEPEVEQSGQQQQQEQPKQETN). Residues 273 to 289 (QSEPEVEQSGQQQQQEQ) show a composition bias toward low complexity.

The protein belongs to the mitochondrion-specific ribosomal protein mS23 family. In terms of assembly, component of the mitochondrial small ribosomal subunit (mt-SSU).

The protein resides in the mitochondrion. Functionally, component of the mitochondrial ribosome (mitoribosome), a dedicated translation machinery responsible for the synthesis of mitochondrial genome-encoded proteins, including at least some of the essential transmembrane subunits of the mitochondrial respiratory chain. The mitoribosomes are attached to the mitochondrial inner membrane and translation products are cotranslationally integrated into the membrane. The chain is Small ribosomal subunit protein mS23 (RSM25) from Candida albicans (strain SC5314 / ATCC MYA-2876) (Yeast).